A 417-amino-acid polypeptide reads, in one-letter code: Serine hydroxymethyltransferase (417 aa).

(6S)-5,6,7,8-tetrahydrofolate is bound by residues L117 and 121 to 123 (GHL). Residue K226 is modified to N6-(pyridoxal phosphate)lysine.

It belongs to the SHMT family. In terms of assembly, homodimer. Requires pyridoxal 5'-phosphate as cofactor.

The protein localises to the cytoplasm. It carries out the reaction (6R)-5,10-methylene-5,6,7,8-tetrahydrofolate + glycine + H2O = (6S)-5,6,7,8-tetrahydrofolate + L-serine. It participates in one-carbon metabolism; tetrahydrofolate interconversion. The protein operates within amino-acid biosynthesis; glycine biosynthesis; glycine from L-serine: step 1/1. Catalyzes the reversible interconversion of serine and glycine with tetrahydrofolate (THF) serving as the one-carbon carrier. This reaction serves as the major source of one-carbon groups required for the biosynthesis of purines, thymidylate, methionine, and other important biomolecules. Also exhibits THF-independent aldolase activity toward beta-hydroxyamino acids, producing glycine and aldehydes, via a retro-aldol mechanism. The sequence is that of Serine hydroxymethyltransferase from Shouchella clausii (strain KSM-K16) (Alkalihalobacillus clausii).